The chain runs to 911 residues: MVLVGQGMEPEEAFTKVQVVYYLSRGGQLQQPHLIDVPVSTHSNGLYLRDVKRRLTSIRGKGMGDSFSWSCKRNYKNNFIWQDLADDDKILPLSDGELVLKGSELYTGFQEKAEFMDGQFDPENASQLPNKIKKLASKKFDFEAVKRSLDMESDKLQEQSDLAAALSLSLQLMSDPHMKRFSKDKSMDLNQQVMNSLSQAKSNAAEECMLDHSVTDISSETLHSEESTVQKFSFNETIRERSKSTASASSSGTDREHSYGPPRKTESMGRERSLPRDLPRSREVSRELPPQVPREAPREKSREMSRELPREAPRELQLPREAPRELPREVPRETSRELPREAPREISRELPREGPREVAREQPREVVVPREVVREVSRELPRDVSRDSSKAVKDTAKTRQEKPEELPTIKTKKSPTCSESGDSTPFMLSPRRLMAALSSPSPEKKFGKLVHSSSTRSSTPSTSAASTQCEDSLPNINIRLAKQATCLSNFRLCGNANPHATDSRPDSPEHPLAAAAQPASGAVPQSPNTRGHQGGPYWPRWRSGRKPRTSSEGKEGPEPPTPPRGPMTKPVTVAKPDPPLKKSFEFDMNVSGVNSAMATPFLQTENNSPSSSESSSAAVSSGKKPASISLSGTSDASDGGNGASSTASSSSEVQNNVSVKEVITQQLPSPSSSEGRPSLNIDTASLPRVSISEAISDVRETVKTTRPDSPESPMKPNPPSSPVRTQLSSSPSFNKRIEDARARARSLVSKEIRSGESRSSKDLLKENDRVKTSSGSMRSGSTRTPNNKNGTTGAGSKTLSGTFNRSPPRINSIMWEDAPLTPTKKEFVNRDDRPLTAGRTNLDWEKTLQEAASLSLPPPDFGQILQECGQCGRTFKPDSLKVHMRGCHALRRSKDFQPFNGTSVAIRTRLQ.

A DIX-like oligomerization domain region spans residues Thr15–Thr107. Disordered regions lie at residues Ser219–Glu470 and Leu492–Ile810. 2 stretches are compositionally biased toward basic and acidic residues: residues Thr253 to Arg286 and Glu295 to Pro407. Positions Ser414–Ser423 are enriched in polar residues. Residues Ser452–Thr467 are compositionally biased toward low complexity. An Association to cell membranes motif is present at residues Cys493–Gly494. A compositionally biased stretch (low complexity) spans Pro511 to Pro527. Positions Ser591–Asn607 are enriched in polar residues. The segment covering Ser608–Val662 has biased composition (low complexity). Polar residues predominate over residues Ile663–Thr683. Basic and acidic residues predominate over residues Ser696–Ser709. Residues Pro722–Phe733 show a composition bias toward polar residues. The span at Lys735 to Lys771 shows a compositional bias: basic and acidic residues. Low complexity predominate over residues Thr772 to Thr784. Positions Pro785 to Arg805 are enriched in polar residues. A C2HC/C3H-type zinc finger spans residues Ile864 to Ser893. Positions 868, 871, 883, and 887 each coordinate Zn(2+).

The protein belongs to the SOSEKI family. In terms of assembly, homodimer. Forms long polymer filaments with other SOKs proteins polymers crucial for polar localization and biological activity. Zn(2+) is required as a cofactor.

Its subcellular location is the cell membrane. Functionally, SOSEKI proteins locally interpret global polarity cues and can influence cell division orientation to coordinate cell polarization relative to body axes. In Marchantia polymorpha (Common liverwort), this protein is Protein SOSEKI.